A 301-amino-acid chain; its full sequence is Pantothenate synthetase (301 aa).

30–37 (MGNLHEGH) lines the ATP pocket. The Proton donor role is filled by His37. Gln61 serves as a coordination point for (R)-pantoate. Gln61 contributes to the beta-alanine binding site. 149-152 (GEKD) provides a ligand contact to ATP. (R)-pantoate is bound at residue Gln155. Residues Val178 and 186 to 189 (MSSR) each bind ATP.

The protein belongs to the pantothenate synthetase family. As to quaternary structure, homodimer.

The protein resides in the cytoplasm. It carries out the reaction (R)-pantoate + beta-alanine + ATP = (R)-pantothenate + AMP + diphosphate + H(+). It functions in the pathway cofactor biosynthesis; (R)-pantothenate biosynthesis; (R)-pantothenate from (R)-pantoate and beta-alanine: step 1/1. Catalyzes the condensation of pantoate with beta-alanine in an ATP-dependent reaction via a pantoyl-adenylate intermediate. This chain is Pantothenate synthetase, found in Vibrio vulnificus (strain YJ016).